Here is a 427-residue protein sequence, read N- to C-terminus: Serine--tRNA ligase (427 aa).

231 to 233 (TAE) contacts L-serine. 262–264 (RSE) contributes to the ATP binding site. Residue Glu285 participates in L-serine binding. 349–352 (EISS) contributes to the ATP binding site. Ser385 contacts L-serine.

Belongs to the class-II aminoacyl-tRNA synthetase family. Type-1 seryl-tRNA synthetase subfamily. Homodimer. The tRNA molecule binds across the dimer.

Its subcellular location is the cytoplasm. The catalysed reaction is tRNA(Ser) + L-serine + ATP = L-seryl-tRNA(Ser) + AMP + diphosphate + H(+). The enzyme catalyses tRNA(Sec) + L-serine + ATP = L-seryl-tRNA(Sec) + AMP + diphosphate + H(+). It participates in aminoacyl-tRNA biosynthesis; selenocysteinyl-tRNA(Sec) biosynthesis; L-seryl-tRNA(Sec) from L-serine and tRNA(Sec): step 1/1. Its function is as follows. Catalyzes the attachment of serine to tRNA(Ser). Is also able to aminoacylate tRNA(Sec) with serine, to form the misacylated tRNA L-seryl-tRNA(Sec), which will be further converted into selenocysteinyl-tRNA(Sec). This Brucella abortus (strain S19) protein is Serine--tRNA ligase.